The primary structure comprises 143 residues: Protein SLC31A2 (143 aa).

Residues methionine 1 to serine 22 lie on the Extracellular side of the membrane. A helical transmembrane segment spans residues proline 23–isoleucine 43. Residues lysine 44–tyrosine 93 are Cytoplasmic-facing. Phosphothreonine is present on threonine 75. Serine 77 carries the phosphoserine modification. Residues phenylalanine 94–valine 114 form a helical membrane-spanning segment. Residues methionine 115 to threonine 119 are Extracellular-facing. Residues tryptophan 120–leucine 140 traverse the membrane as a helical segment. Residues asparagine 141 to threonine 143 are Cytoplasmic-facing.

This sequence belongs to the copper transporter (Ctr) (TC 1.A.56) family. SLC31A subfamily. In terms of assembly, oligomer. Interacts with SLC31A1; this interaction stabilizes SLC31A2 and protects it from ubiquitination and the subsequent degradation. Post-translationally, ubiquitinated; ubiquitination and the subsequent proteasomal degradation are prevent by SLC31A1 that stabilizes it.

It localises to the membrane. It is found in the cytoplasmic vesicle membrane. The protein resides in the late endosome membrane. Its subcellular location is the lysosome membrane. The protein localises to the recycling endosome membrane. Its function is as follows. Does not function as a copper(1+) importer in vivo. However, in vitro functions as a low-affinity copper(1+) importer. Regulator of SLC31A1 which facilitates the cleavage of the SLC31A1 ecto-domain or which stabilizes the truncated form of SLC31A1 (Truncated CTR1 form), thereby drives the SLC31A1 truncated form-dependent endosomal copper export and modulates the copper and cisplatin accumulation via SLC31A1. In Mus musculus (Mouse), this protein is Protein SLC31A2.